Reading from the N-terminus, the 229-residue chain is C-&gt;U-editing enzyme APOBEC-1 (229 aa).

The CMP/dCMP-type deaminase domain maps to V10–L134. H61 contributes to the Zn(2+) binding site. The active-site Proton donor is E63. Positions 93 and 96 each coordinate Zn(2+).

The protein belongs to the cytidine and deoxycytidylate deaminase family. Homodimer. Interacts with A1CF; form an mRNA editing complex. Interacts with RBM47; form an mRNA editing complex. Found in a complex with CELF2/CUGBP2 and A1CF. Interacts with HNRPAB. Interacts with SYNCRIP. Zn(2+) serves as cofactor.

The protein localises to the cytoplasm. It is found in the nucleus. The enzyme catalyses a cytidine in mRNA + H2O + H(+) = a uridine in mRNA + NH4(+). It carries out the reaction cytidine(6666) in apoB mRNA + H2O + H(+) = uridine(6666) in apoB mRNA + NH4(+). Its function is as follows. Cytidine deaminase catalyzing the cytidine to uridine postranscriptional editing of a variety of mRNAs. Form complexes with cofactors that confer differential editing activity and selectivity. Responsible for the postranscriptional editing of a CAA codon for Gln to a UAA codon for stop in the apolipoprotein B mRNA. Also involved in CGA (Arg) to UGA (Stop) editing in the NF1 mRNA. May also play a role in the epigenetic regulation of gene expression by participating in DNA demethylation. The chain is C-&gt;U-editing enzyme APOBEC-1 from Mesocricetus auratus (Golden hamster).